Here is an 845-residue protein sequence, read N- to C-terminus: Protein translocase subunit SecA (845 aa).

ATP contacts are provided by residues glutamine 85, 103–107 (GEGKT), and aspartate 492. Positions 787–845 (REQVAQGQAEHPETEQDAAAQSNTSAKRQPVRVDKKVGRNDLCPCGSGKKFKNCHGRNA) are disordered. 4 residues coordinate Zn(2+): cysteine 829, cysteine 831, cysteine 840, and histidine 841. The span at 835 to 845 (KKFKNCHGRNA) shows a compositional bias: basic residues.

The protein belongs to the SecA family. In terms of assembly, monomer and homodimer. Part of the essential Sec protein translocation apparatus which comprises SecA, SecYEG and auxiliary proteins SecDF. Other proteins may also be involved. Requires Zn(2+) as cofactor.

Its subcellular location is the cell membrane. It is found in the cytoplasm. It catalyses the reaction ATP + H2O + cellular proteinSide 1 = ADP + phosphate + cellular proteinSide 2.. Functionally, part of the Sec protein translocase complex. Interacts with the SecYEG preprotein conducting channel. Has a central role in coupling the hydrolysis of ATP to the transfer of proteins into and across the cell membrane, serving as an ATP-driven molecular motor driving the stepwise translocation of polypeptide chains across the membrane. The protein is Protein translocase subunit SecA of Enterococcus faecalis (strain ATCC 700802 / V583).